The sequence spans 2341 residues: Pecanex-like protein 1 (2341 aa).

The next 2 membrane-spanning stretches (helical) occupy residues 28 to 50 (ATFV…FTLY) and 57 to 74 (MIIV…FIVL). Residues 98–163 (FTDQRTKAEQ…SNQIGSGSSR (66 aa)) form a disordered region. Residue asparagine 109 is glycosylated (N-linked (GlcNAc...) asparagine). Polar residues predominate over residues 143–163 (SSRNSYAGLDPSNQIGSGSSR). N-linked (GlcNAc...) asparagine glycosylation is present at asparagine 215. 3 disordered regions span residues 270–294 (HSHS…VAFP), 311–331 (DPVS…SLVE), and 344–689 (DLKI…TRAR). Residues 272 to 282 (HSYRKDHRPRG) show a composition bias toward basic residues. Polar residues-rich tracts occupy residues 320 to 331 (KPLSGSKESLVE) and 347 to 356 (INTSQPPTKS). An N-linked (GlcNAc...) asparagine glycan is attached at asparagine 348. Residues 370-388 (SLRSLSTRSSGSTESYCSG) show a composition bias toward low complexity. Asparagine 394 carries N-linked (GlcNAc...) asparagine glycosylation. Over residues 394 to 404 (NSTVSSYKSEQ) the composition is skewed to polar residues. Composition is skewed to basic and acidic residues over residues 430 to 455 (KKEC…EKIA), 465 to 478 (HEAK…EMHN), and 527 to 544 (SKVR…DVRP). The segment covering 554 to 569 (ASAHKSGRRRTGKKRA) has biased composition (basic residues). Residues 605-635 (QSDLSRASSVQSAHQFSSDSSSSTTSHSCQS) are compositionally biased toward low complexity. An N-linked (GlcNAc...) asparagine glycan is attached at asparagine 702. The segment at 756–834 (QVAFPEGEEQ…STAQVKVQSR (79 aa)) is disordered. The segment covering 814 to 832 (LSLQDGQQGQQSTAQVKVQ) has biased composition (low complexity). N-linked (GlcNAc...) asparagine glycosylation is found at asparagine 852 and asparagine 863. A run of 3 helical transmembrane segments spans residues 1003–1025 (ILEN…ILLI), 1032–1049 (IWVF…YSLL), and 1067–1089 (IAYS…DYGS). N-linked (GlcNAc...) asparagine glycosylation is present at asparagine 1091. The helical transmembrane segment at 1110-1132 (FISARDLVIVFTLCFPIVFFIGL) threads the bilayer. N-linked (GlcNAc...) asparagine glycosylation occurs at asparagine 1155. The next 4 membrane-spanning stretches (helical) occupy residues 1160–1182 (LLAA…GLCY), 1194–1213 (IPVL…YHLS), 1266–1288 (LVVC…FTVL), and 1295–1312 (VLYT…YVLP). N-linked (GlcNAc...) asparagine glycans are attached at residues asparagine 1579, asparagine 1720, asparagine 1982, asparagine 2062, and asparagine 2072. 2 disordered regions span residues 2062-2120 (NATT…SPAR) and 2217-2237 (GQSS…NNSH). Polar residues-rich tracts occupy residues 2069 to 2078 (PHSNVTQGSI), 2096 to 2114 (YPPT…SGLV), and 2217 to 2236 (GQSS…ANNS). Asparagine 2234 and asparagine 2260 each carry an N-linked (GlcNAc...) asparagine glycan.

It belongs to the pecanex family.

The protein resides in the membrane. The protein is Pecanex-like protein 1 of Homo sapiens (Human).